The following is a 138-amino-acid chain: Translation initiation factor 5A (138 aa).

A Hypusine modification is found at Lys-37.

Belongs to the eIF-5A family.

It is found in the cytoplasm. Its function is as follows. Functions by promoting the formation of the first peptide bond. This is Translation initiation factor 5A (eIF5A) from Thermococcus sibiricus (strain DSM 12597 / MM 739).